The sequence spans 153 residues: Arachidonate 5-lipoxygenase-activating protein (153 aa).

Over 1–8 (MDQETVGN) the chain is Lumenal. Residues 9-30 (VVLLAIVTLISVVQNGFFAHKV) form a helical membrane-spanning segment. The Cytoplasmic portion of the chain corresponds to 31–52 (EHESRTQNGRSFQRTGTLAFER). The chain crosses the membrane as a helical span at residues 53–77 (VYTANQNCVDAYPTFLAVLWSAGLL). The Lumenal portion of the chain corresponds to 78–80 (CSQ). A helical transmembrane segment spans residues 81–102 (VPAAFAGLMYLLVRQKYFVGYL). The Cytoplasmic portion of the chain corresponds to 103–107 (GERTQ). An intramembrane segment occupies 108–115 (STPGYIFG). A helical transmembrane segment spans residues 116-128 (KRIILFLFLMSVA). Residues 129-153 (GIFNYYLIFFFGSDFENYIKTVTTT) lie on the Lumenal side of the membrane.

It belongs to the MAPEG family. Homotrimer. Interacts with LTC4S and ALOX5.

It is found in the nucleus membrane. It localises to the endoplasmic reticulum membrane. In terms of biological role, required for leukotriene biosynthesis by ALOX5 (5-lipoxygenase). Anchors ALOX5 to the membrane. Binds arachidonic acid, and could play an essential role in the transfer of arachidonic acid to ALOX5. Binds to MK-886, a compound that blocks the biosynthesis of leukotrienes. The polypeptide is Arachidonate 5-lipoxygenase-activating protein (ALOX5AP) (Macaca mulatta (Rhesus macaque)).